A 1666-amino-acid chain; its full sequence is Complement C3 (1666 aa).

The N-terminal stretch at 1-22 is a signal peptide; the sequence is MGPAAGPSLLLLLLASVSLALG. S70, S296, and S302 each carry phosphoserine. 13 disulfides stabilise this stretch: C557–C821, C630–C666, C698–C725, C699–C732, C712–C733, C878–C1517, C1106–C1163, C1363–C1493, C1394–C1462, C1510–C1515, C1522–C1593, C1540–C1664, and C1640–C1649. S676 carries the post-translational modification Phosphoserine. Residues 698-733 enclose the Anaphylatoxin-like domain; the sequence is CCEDGMRENPMQFSCQRRARYVSLGEACVKAFLDCC. Residue N944 is glycosylated (N-linked (GlcNAc...) asparagine). S973 is modified (phosphoserine). A cross-link (isoglutamyl cysteine thioester (Cys-Gln)) is located at residues 1015 to 1018; that stretch reads CGEQ. S1326 carries the post-translational modification Phosphoserine. One can recognise an NTR domain in the interval 1522 to 1664; it reads CFIQLPEKIT…FTENMVVFGC (143 aa). A Phosphoserine modification is found at S1576. Residue N1620 is glycosylated (N-linked (GlcNAc...) asparagine). The segment at 1637–1662 is interaction with CFP/properdin; it reads AEECQDEENQQQCQDLGTFTENMVVF.

In terms of assembly, in absence of complement activation, the C3 precursor is first processed by the removal of 4 Arg residues, forming two chains, beta and alpha, linked by a disulfide bond. As to quaternary structure, complement C3b is composed of complement C3b and complement C3 beta chains that are associated via disulfide bonds. Non-enzymatic component of the C5 convertase, also named C4bC2bC3b, composed of the serine protease complement C2b (C2), complement C3b, as well as complement C4b (C4). Non-enzymatic component of the C5 convertase of the alternative complement pathways composed of the serine protease complement CFB and complement C3b. Interacts with CFP; interaction takes place together with CFB in the alternative complement system and allows the complex to become active. Interacts with CR1 (via Sushi 8 and Sushi 9 domains). Interacts with CFH. Interacts with CFH. Interacts with CR2. In terms of assembly, during pregnancy, C3dg exists as a complex (probably a 2:2:2 heterohexamer) with AGT and the proform of PRG2. Interacts with CR2 (via the N-terminal Sushi domains 1 and 2). Post-translationally, C3 precursor is first processed by the removal of 4 Arg residues, forming two chains, beta and alpha, linked by a disulfide bond. During activation of the complement systems, the alpha chain is cleaved into C3a and C3b by the C3 convertase: C3b stays linked to the beta chain, while C3a is released in the plasma. The alpha chain is cleaved by the serine protease complement C2b component of the C3 convertase to generate C3a and C3b following activation by the classical, lectin and GZMK complement systems. The alpha chain is cleaved by CFB component of the C3 convertase to generate C3a and C3b following activation by the alternative complement system. In terms of processing, C3a is further processed by carboxypeptidases to release the C-terminal arginine residue generating the acylation stimulating protein (ASP). Levels of ASP are increased in adipocytes in the postprandial period and by insulin and dietary chylomicrons. Complement C3b is rapidly split in two positions by factor I (CFI) and a cofactor (CFH) to form iC3b (inactivated C3b) and C3f which is released. CFI and CFH catalyze proteolytic degradation of already-deposited complement C3b. Then iC3b is slowly cleaved (possibly by CFI) to form C3c (beta chain + alpha' chain fragment 1 + alpha' chain fragment 2), C3dg and C3f. Other proteases produce other fragments such as C3d or C3g. Post-translationally, upon activation, the internal thioester bond reacts with carbohydrate antigens on the target surface to form amide or ester bonds, leading to covalent association with the surface of pathogens. In terms of processing, complement C3b interacts with complement C4b via a thioester linkage. Phosphorylated by FAM20C in the extracellular medium.

It is found in the secreted. The protein localises to the cell surface. Complement activation is inhibited by VSIG4. Precursor of non-enzymatic components of the classical, alternative, lectin and GZMK complement pathways, which consist in a cascade of proteins that leads to phagocytosis and breakdown of pathogens and signaling that strengthens the adaptive immune system. Its function is as follows. Non-enzymatic component of C5 convertase. Generated following cleavage by C3 convertase, it covalently attaches to the surface of pathogens, where it acts as an opsonin that marks the surface of antigens for removal. Complement C3b binds covalently via its reactive thioester, to cell surface carbohydrates or immune aggregates. Together with complement C4b, it then recruits the serine protease complement C2b to form the C5 convertase, which cleaves and activate C5, the next component of the complement pathways. In the alternative complement pathway, recruits the serine protease CFB to form the C5 convertase that cleaves and activates C5. In terms of biological role, mediator of local inflammatory process released following cleavage by C3 convertase. Acts by binding to its receptor, C3AR1, activating G protein-coupled receptor signaling, promoting the phosphorylation, ARRB2-mediated internalization and endocytosis of C3AR1. C3a anaphylatoxin stimulates the activation of immune cells such as mast cells and basophilic leukocytes to release inflammation agents, such as cytokines, chemokines and histamine, which promote inflammation development. Also acts as potent chemoattractant for the migration of macrophages and neutrophils to the inflamed tissues, resulting in neutralization of the inflammatory triggers by multiple ways, such as phagocytosis and generation of reactive oxidants. Functionally, adipogenic hormone that stimulates triglyceride synthesis and glucose transport in adipocytes, regulating fat storage and playing a role in postprandial triglyceride clearance. Appears to stimulate triglyceride synthesis via activation of the PLC, MAPK and AKT signaling pathways. Acts by binding to its receptor, C5AR2, activating G protein-coupled receptor signaling, promoting the phosphorylation, ARRB2-mediated internalization and endocytosis of C5AR2. Acts as a chemoattractant for neutrophils in chronic inflammation. This is Complement C3 from Cavia porcellus (Guinea pig).